The following is a 148-amino-acid chain: IQ domain-containing protein F5 (148 aa).

IQ domains are found at residues glutamate 11 to isoleucine 40 and glutamine 67 to isoleucine 96.

The chain is IQ domain-containing protein F5 (IQCF5) from Homo sapiens (Human).